A 172-amino-acid polypeptide reads, in one-letter code: NADH-quinone oxidoreductase subunit B (172 aa).

Cys42, Cys43, Cys107, and Cys136 together coordinate [4Fe-4S] cluster.

The protein belongs to the complex I 20 kDa subunit family. In terms of assembly, NDH-1 is composed of 14 different subunits. Subunits NuoB, C, D, E, F, and G constitute the peripheral sector of the complex. It depends on [4Fe-4S] cluster as a cofactor.

The protein localises to the cell inner membrane. The enzyme catalyses a quinone + NADH + 5 H(+)(in) = a quinol + NAD(+) + 4 H(+)(out). Functionally, NDH-1 shuttles electrons from NADH, via FMN and iron-sulfur (Fe-S) centers, to quinones in the respiratory chain. The immediate electron acceptor for the enzyme in this species is believed to be ubiquinone. Couples the redox reaction to proton translocation (for every two electrons transferred, four hydrogen ions are translocated across the cytoplasmic membrane), and thus conserves the redox energy in a proton gradient. The chain is NADH-quinone oxidoreductase subunit B from Sulfurovum sp. (strain NBC37-1).